Here is a 229-residue protein sequence, read N- to C-terminus: Urease accessory protein UreF (229 aa).

Belongs to the UreF family. UreD, UreF and UreG form a complex that acts as a GTP-hydrolysis-dependent molecular chaperone, activating the urease apoprotein by helping to assemble the nickel containing metallocenter of UreC. The UreE protein probably delivers the nickel.

The protein localises to the cytoplasm. Its function is as follows. Required for maturation of urease via the functional incorporation of the urease nickel metallocenter. This chain is Urease accessory protein UreF, found in Staphylococcus aureus (strain bovine RF122 / ET3-1).